Reading from the N-terminus, the 159-residue chain is Transcription repressor OFP6 (159 aa).

Residues 39-60 are disordered; the sequence is PKRPSSTYRHCHSSISSATPSS. A compositionally biased stretch (low complexity) spans 51 to 60; sequence SSISSATPSS. The OVATE domain occupies 70–129; the sequence is VEKDSDDPYLDFRQSMLQMILENQIYSKDELRELLQCFLSLNSHYHHGIIVRAFSEIWED.

As to quaternary structure, interacts with KNAT1 and KNAT7. Expressed in roots, shoots, rosette and cauline leaves, stems, flower buds and siliques.

It localises to the nucleus. Functionally, transcriptional repressor that regulates multiple aspects of plant growth and development through the regulation of BEL1-LIKE (BLH) and KNOX TALE (KNAT) homeodomain transcription factors. The polypeptide is Transcription repressor OFP6 (OFP6) (Arabidopsis thaliana (Mouse-ear cress)).